The primary structure comprises 558 residues: Glutamine-dependent NAD(+) synthetase (558 aa).

Positions 2-262 (FTIALAQLNP…LALLSYDLSS (261 aa)) constitute a CN hydrolase domain. The active-site Proton acceptor; for glutaminase activity is the glutamate 42. The For glutaminase activity role is filled by lysine 117. Tyrosine 123 contacts L-glutamine. The Nucleophile; for glutaminase activity role is filled by cysteine 153. Residues serine 190 and lysine 196 each coordinate L-glutamine. Residues 284–558 (ALVLGVGDYL…IAQAFHPQGS (275 aa)) form a ligase region. 304–311 (GLSGGIDS) is an ATP binding site. Asparagine 387 contacts deamido-NAD(+). Threonine 411 is a binding site for ATP. Deamido-NAD(+) contacts are provided by glutamate 416 and lysine 526.

In the C-terminal section; belongs to the NAD synthetase family.

It carries out the reaction deamido-NAD(+) + L-glutamine + ATP + H2O = L-glutamate + AMP + diphosphate + NAD(+) + H(+). The protein operates within cofactor biosynthesis; NAD(+) biosynthesis; NAD(+) from deamido-NAD(+) (L-Gln route): step 1/1. Functionally, catalyzes the ATP-dependent amidation of deamido-NAD to form NAD. Uses L-glutamine as a nitrogen source. The polypeptide is Glutamine-dependent NAD(+) synthetase (Synechocystis sp. (strain ATCC 27184 / PCC 6803 / Kazusa)).